Here is a 422-residue protein sequence, read N- to C-terminus: UDP-N-acetylglucosamine 1-carboxyvinyltransferase (422 aa).

K22–N23 lines the phosphoenolpyruvate pocket. R93 contacts UDP-N-acetyl-alpha-D-glucosamine. C117 acts as the Proton donor in catalysis. At C117 the chain carries 2-(S-cysteinyl)pyruvic acid O-phosphothioketal. UDP-N-acetyl-alpha-D-glucosamine-binding positions include R122–L126, D308, and L330.

It belongs to the EPSP synthase family. MurA subfamily.

The protein localises to the cytoplasm. The catalysed reaction is phosphoenolpyruvate + UDP-N-acetyl-alpha-D-glucosamine = UDP-N-acetyl-3-O-(1-carboxyvinyl)-alpha-D-glucosamine + phosphate. Its pathway is cell wall biogenesis; peptidoglycan biosynthesis. In terms of biological role, cell wall formation. Adds enolpyruvyl to UDP-N-acetylglucosamine. This Helicobacter pylori (strain J99 / ATCC 700824) (Campylobacter pylori J99) protein is UDP-N-acetylglucosamine 1-carboxyvinyltransferase.